The chain runs to 201 residues: MVFIADYGAGNLRSVQKAFDYLGIPATVSSDPAKMAGCRKVVLPGVGAFGQAIEALDRLGFTDALSEHVDKGGHLFGICLGMQLMLSDSEEMGSHRGLGLIPGSVRHFQSDSDKIPQIGWNSIDLKQESVLFRGIADHSFFYFVHSYYCDPLEASSIASTTWFAGKNFCSAIEKNGIFAVQFHPEKSSEAGLQVLRNFAEC.

Residues 1–201 (MVFIADYGAG…LQVLRNFAEC (201 aa)) enclose the Glutamine amidotransferase type-1 domain. Cysteine 79 functions as the Nucleophile in the catalytic mechanism. Residues histidine 183 and glutamate 185 contribute to the active site.

As to quaternary structure, heterodimer of HisH and HisF.

Its subcellular location is the cytoplasm. The catalysed reaction is 5-[(5-phospho-1-deoxy-D-ribulos-1-ylimino)methylamino]-1-(5-phospho-beta-D-ribosyl)imidazole-4-carboxamide + L-glutamine = D-erythro-1-(imidazol-4-yl)glycerol 3-phosphate + 5-amino-1-(5-phospho-beta-D-ribosyl)imidazole-4-carboxamide + L-glutamate + H(+). The enzyme catalyses L-glutamine + H2O = L-glutamate + NH4(+). It participates in amino-acid biosynthesis; L-histidine biosynthesis; L-histidine from 5-phospho-alpha-D-ribose 1-diphosphate: step 5/9. Functionally, IGPS catalyzes the conversion of PRFAR and glutamine to IGP, AICAR and glutamate. The HisH subunit catalyzes the hydrolysis of glutamine to glutamate and ammonia as part of the synthesis of IGP and AICAR. The resulting ammonia molecule is channeled to the active site of HisF. The polypeptide is Imidazole glycerol phosphate synthase subunit HisH (Chlorobium luteolum (strain DSM 273 / BCRC 81028 / 2530) (Pelodictyon luteolum)).